The sequence spans 252 residues: Trans-aconitate 2-methyltransferase (252 aa).

It belongs to the methyltransferase superfamily. Tam family.

The protein resides in the cytoplasm. It carries out the reaction trans-aconitate + S-adenosyl-L-methionine = (E)-3-(methoxycarbonyl)pent-2-enedioate + S-adenosyl-L-homocysteine. In terms of biological role, catalyzes the S-adenosylmethionine monomethyl esterification of trans-aconitate. The polypeptide is Trans-aconitate 2-methyltransferase (Escherichia coli O1:K1 / APEC).